A 545-amino-acid polypeptide reads, in one-letter code: T-complex protein 1 subunit gamma (545 aa).

At Met1 the chain carries N-acetylmethionine. The interval 1 to 24 (MMGHRPVLVLSQNTKRESGRKVQS) is disordered. Position 11 is a phosphoserine (Ser11). Residue Lys15 forms a Glycyl lysine isopeptide (Lys-Gly) (interchain with G-Cter in SUMO2) linkage. An ADP-binding site is contributed by Gly42. Gly42 contacts ATP. Residue Asp93 coordinates Mg(2+). Positions 94, 95, 96, 97, 162, and 163 each coordinate ADP. ATP-binding residues include Gly94, Thr95, and Thr96. Residue Ser170 is modified to Phosphoserine. The residue at position 222 (Lys222) is an N6-acetyllysine. Phosphoserine occurs at positions 243 and 244. The residue at position 247 (Tyr247) is a Phosphotyrosine. Residues Lys248 and Lys249 each participate in a glycyl lysine isopeptide (Lys-Gly) (interchain with G-Cter in SUMO2) cross-link. Ser252 bears the Phosphoserine mark. A disulfide bridge connects residues Cys366 and Cys372. A Glycyl lysine isopeptide (Lys-Gly) (interchain with G-Cter in SUMO2) cross-link involves residue Lys381. Gly411 provides a ligand contact to ADP. Gly411 is a binding site for ATP. Residues Thr430 and Thr459 each carry the phosphothreonine modification. ADP is bound by residues Gly482, Glu483, Glu497, and Lys502. Residue Gly482 participates in ATP binding. Glu497 provides a ligand contact to ATP. A disordered region spans residues 526-545 (HKKKGDDQSRQGGAPDAGQE).

This sequence belongs to the TCP-1 chaperonin family. Component of the chaperonin-containing T-complex (TRiC), a hexadecamer composed of two identical back-to-back stacked rings enclosing a protein folding chamber. Each ring is made up of eight different subunits: TCP1/CCT1, CCT2, CCT3, CCT4, CCT5, CCT6A/CCT6, CCT7, CCT8. Interacts with PACRG. Interacts with DNAAF4. Interacts with DLEC1.

The protein resides in the cytoplasm. The catalysed reaction is ATP + H2O = ADP + phosphate + H(+). Component of the chaperonin-containing T-complex (TRiC), a molecular chaperone complex that assists the folding of actin, tubulin and other proteins upon ATP hydrolysis. The TRiC complex mediates the folding of WRAP53/TCAB1, thereby regulating telomere maintenance. As part of the TRiC complex may play a role in the assembly of BBSome, a complex involved in ciliogenesis regulating transports vesicles to the cilia. The sequence is that of T-complex protein 1 subunit gamma (CCT3) from Bos taurus (Bovine).